We begin with the raw amino-acid sequence, 1390 residues long: Hepatocyte growth factor receptor (1390 aa).

The signal sequence occupies residues 1–24 (MKAPAVLAPGILVLLFTLVQRSNG). Residues 25 to 932 (ECKEALAKSE…VIVQPDQNFT (908 aa)) are Extracellular-facing. In terms of domain architecture, Sema spans 27–515 (KEALAKSEMN…TGKKITKIPL (489 aa)). The N-linked (GlcNAc...) asparagine glycan is linked to N45. 4 disulfides stabilise this stretch: C95–C101, C98–C160, C133–C141, and C172–C175. N106 is a glycosylation site (N-linked (GlcNAc...) asparagine). N-linked (GlcNAc...) asparagine glycosylation is present at N149. N-linked (GlcNAc...) asparagine glycosylation is present at N202. 2 disulfides stabilise this stretch: C298-C363 and C385-C397. 2 N-linked (GlcNAc...) asparagine glycosylation sites follow: N399 and N405. Cystine bridges form between C520/C538, C526/C561, C529/C545, and C541/C551. IPT/TIG domains lie at 563 to 655 (PAIY…FSYV), 657 to 739 (PVIT…FSYR), and 742 to 836 (PIVY…LIYV). T582 carries an O-linked (Man) threonine glycan. Residues N607 and N635 are each glycosylated (N-linked (GlcNAc...) asparagine). O-linked (Man) threonine glycosylation is found at T676 and T761. N-linked (GlcNAc...) asparagine glycans are attached at residues N785, N879, and N930. Residues 933–955 (GLIAGVVSISIALLLLLGFFLWL) form a helical membrane-spanning segment. Residues 956–1390 (KKRKQIKDLG…TRPASFWETS (435 aa)) lie on the Cytoplasmic side of the membrane. The residue at position 966 (S966) is a Phosphoserine. T977 carries the post-translational modification Phosphothreonine. A phosphoserine mark is found at S990, S997, and S1000. Y1003 is modified (phosphotyrosine). In terms of domain architecture, Protein kinase spans 1078-1345 (VHFNEVIGRG…RISAIFSTFI (268 aa)). ATP contacts are provided by residues 1084 to 1092 (IGRGHFGCV) and K1110. Catalysis depends on D1204, which acts as the Proton acceptor. The tract at residues 1212–1390 (LDEKFTVKVA…TRPASFWETS (179 aa)) is interaction with RANBP9. Y1230 carries the post-translational modification Phosphotyrosine. Phosphotyrosine; by autocatalysis occurs at positions 1234 and 1235. T1289 is modified (phosphothreonine). An interaction with MUC20 region spans residues 1320–1359 (WHPKAEMRPSFSELVSRISAIFSTFIGEHYVHVNATYVNV). A phosphotyrosine; by autocatalysis mark is found at Y1349 and Y1356. Y1365 carries the phosphotyrosine modification.

It belongs to the protein kinase superfamily. Tyr protein kinase family. As to quaternary structure, heterodimer made of an alpha chain (50 kDa) and a beta chain (145 kDa) which are disulfide linked. Binds PLXNB1. Interacts when phosphorylated with downstream effectors including STAT3, PIK3R1, SRC, PCLG1, GRB2 and GAB1. Interacts with SPSB1, SPSB2 and SPSB4. Interacts with INPP5D/SHIP1. When phosphorylated at Tyr-1356, interacts with INPPL1/SHIP2. Interacts with RANBP9 and RANBP10, as well as SPSB1, SPSB2, SPSB3 and SPSB4. SPSB1 binding occurs in the presence and in the absence of HGF, however HGF treatment has a positive effect on this interaction. Interacts with MUC20; prevents interaction with GRB2 and suppresses hepatocyte growth factor-induced cell proliferation. Interacts with GRB10. Interacts with PTPN1 and PTPN2. Interacts with HSP90AA1 and HSP90AB1; the interaction suppresses MET kinase activity. Interacts with tensin TNS3. Interacts (when phosphorylated) with tensin TNS4 (via SH2 domain); the interaction increases MET protein stability by inhibiting MET endocytosis and subsequent lysosomal degradation. Autophosphorylated in response to ligand binding on Tyr-1234 and Tyr-1235 in the kinase domain leading to further phosphorylation of Tyr-1349 and Tyr-1356 in the C-terminal multifunctional docking site. Dephosphorylated by PTPRJ at Tyr-1349 and Tyr-1365. Dephosphorylated by PTPN1 and PTPN2. Post-translationally, ubiquitinated. Ubiquitination by CBL regulates the receptor stability and activity through proteasomal degradation. In terms of processing, O-mannosylation of IPT/TIG domains by TMEM260 is required for protein maturation. O-mannosylated residues are composed of single mannose glycans that are not elongated or modified.

It is found in the membrane. It catalyses the reaction L-tyrosyl-[protein] + ATP = O-phospho-L-tyrosyl-[protein] + ADP + H(+). Its activity is regulated as follows. In its inactive state, the C-terminal tail interacts with the catalytic domain and inhibits the kinase activity. Upon ligand binding, the C-terminal tail is displaced and becomes phosphorylated, thus increasing the kinase activity. Its function is as follows. Receptor tyrosine kinase that transduces signals from the extracellular matrix into the cytoplasm by binding to hepatocyte growth factor/HGF ligand. Regulates many physiological processes including proliferation, scattering, morphogenesis and survival. Ligand binding at the cell surface induces autophosphorylation of MET on its intracellular domain that provides docking sites for downstream signaling molecules. Following activation by ligand, interacts with the PI3-kinase subunit PIK3R1, PLCG1, SRC, GRB2, STAT3 or the adapter GAB1. Recruitment of these downstream effectors by MET leads to the activation of several signaling cascades including the RAS-ERK, PI3 kinase-AKT, or PLCgamma-PKC. The RAS-ERK activation is associated with the morphogenetic effects while PI3K/AKT coordinates prosurvival effects. During embryonic development, MET signaling plays a role in gastrulation, development and migration of muscles and neuronal precursors, angiogenesis and kidney formation. In adults, participates in wound healing as well as organ regeneration and tissue remodeling. Also promotes differentiation and proliferation of hematopoietic cells. This chain is Hepatocyte growth factor receptor (MET), found in Pongo abelii (Sumatran orangutan).